The sequence spans 897 residues: 3'-5' exonuclease DinG (897 aa).

The Exonuclease domain maps to 8 to 161; it reads VVDLETTGNQ…DEDAATTAKL (154 aa). The region spanning 241–496 is the Helicase ATP-binding domain; that stretch reads SKAVDQLGLT…KAIDQLEKQR (256 aa). Position 276-283 (276-283) interacts with ATP; it reads ASLGSGKS. The DEAH box signature appears at 448–451; that stretch reads DEAH. The 191-residue stretch at 703 to 893 folds into the Helicase C-terminal domain; sequence NIDEYVASIV…QFGKLLRQIQ (191 aa).

The protein belongs to the helicase family. DinG subfamily. Type 2 sub-subfamily. As to quaternary structure, monomer in solution.

Its activity is regulated as follows. The nuclease activity is inhibited by ATP or ADP. Functionally, 3'-5' exonuclease acting on single-stranded DNA (ssDNA) and RNA (ssRNA) substrates. Displays ssDNA-stimulated ATPase activity, but lacks helicase activity. This chain is 3'-5' exonuclease DinG, found in Staphylococcus aureus (strain MRSA252).